Consider the following 226-residue polypeptide: Gap junction beta-2 protein (226 aa).

An intramembrane segment occupies 2-13 (DWGALQTILGGV). The Cytoplasmic portion of the chain corresponds to 14-20 (NKYSTSI). Residues 21 to 40 (GKIWLTVLFIFRIMILVVAA) form a helical membrane-spanning segment. Over 41–73 (KEVWGDEQADFVCNTLQPGCKNVCYDHYFPISH) the chain is Extracellular. Ca(2+) contacts are provided by glutamate 42, glycine 45, and glutamate 47. 3 disulfide bridges follow: cysteine 53–cysteine 180, cysteine 60–cysteine 174, and cysteine 64–cysteine 169. The helical transmembrane segment at 74-94 (IRLWALQLIFVSTPALLVAMH) threads the bilayer. Over 95 to 135 (VAYRRHEKKRKFIKGEIKNEFKDIEEIKTQKVRIEGSLWWT) the chain is Cytoplasmic. Residues 136–156 (YTSSIFFRVVFEAAFMYVFYV) traverse the membrane as a helical segment. The Extracellular portion of the chain corresponds to 157-189 (MYDGFSMQRLVKCNAWPCPNTVDCFVSRPTEKT). The chain crosses the membrane as a helical span at residues 190–210 (VFTVFMIAVSGICILLNVTEL). The Cytoplasmic segment spans residues 211–226 (CYLLIRYCSGKSKKPV).

This sequence belongs to the connexin family. Beta-type (group I) subfamily. A hemichannel or connexon is composed of a hexamer of connexins. A functional gap junction is formed by the apposition of two hemichannels. Forms heteromeric channels with GJB4. Interacts with CNST.

The protein resides in the cell membrane. Its subcellular location is the cell junction. It localises to the gap junction. Its function is as follows. Structural component of gap junctions. Gap junctions are dodecameric channels that connect the cytoplasm of adjoining cells. They are formed by the docking of two hexameric hemichannels, one from each cell membrane. Small molecules and ions diffuse from one cell to a neighboring cell via the central pore. The sequence is that of Gap junction beta-2 protein (GJB2) from Macaca mulatta (Rhesus macaque).